We begin with the raw amino-acid sequence, 105 residues long: Large ribosomal subunit protein bL21 (105 aa).

This sequence belongs to the bacterial ribosomal protein bL21 family. As to quaternary structure, part of the 50S ribosomal subunit. Contacts protein L20.

This protein binds to 23S rRNA in the presence of protein L20. The protein is Large ribosomal subunit protein bL21 of Dictyoglomus thermophilum (strain ATCC 35947 / DSM 3960 / H-6-12).